Here is a 194-residue protein sequence, read N- to C-terminus: 23 kDa U4/U6.U5 small nuclear ribonucleoprotein component (194 aa).

The C2H2-type zinc finger occupies 80–104 (FYCDICNLTFKDTLQYIDHLNHKVH).

Component of the U4/U6-U5 tri-snRNP complex composed of the U4, U6 and U5 snRNAs and at least PRP3, PRP4, PRP6, PRP8, PRP18, PRP31, PRP38, SNU13, SNU23, SNU66, SNU114, SPP381, SMB1, SMD1, SMD2, SMD3, SMX2, SMX3, LSM2, LSM3, LSM4, LSM5, LSM6, LSM7, LSM8, BRR2 and DIB1.

It localises to the nucleus. Its function is as follows. Participates in pre-mRNA splicing. Part of the U4/U5/U6 tri-snRNP complex, one of the building blocks of the spliceosome. The polypeptide is 23 kDa U4/U6.U5 small nuclear ribonucleoprotein component (SNU23) (Saccharomyces cerevisiae (strain ATCC 204508 / S288c) (Baker's yeast)).